The chain runs to 423 residues: Glucose-1-phosphate adenylyltransferase (423 aa).

Alpha-D-glucose 1-phosphate contacts are provided by residues Tyr108, Gly173, 188-189 (EK), and Ser207.

The protein belongs to the bacterial/plant glucose-1-phosphate adenylyltransferase family. In terms of assembly, homotetramer.

It catalyses the reaction alpha-D-glucose 1-phosphate + ATP + H(+) = ADP-alpha-D-glucose + diphosphate. It functions in the pathway glycan biosynthesis; glycogen biosynthesis. In terms of biological role, involved in the biosynthesis of ADP-glucose, a building block required for the elongation reactions to produce glycogen. Catalyzes the reaction between ATP and alpha-D-glucose 1-phosphate (G1P) to produce pyrophosphate and ADP-Glc. The protein is Glucose-1-phosphate adenylyltransferase of Francisella tularensis subsp. holarctica (strain FTNF002-00 / FTA).